The following is an 867-amino-acid chain: Alanine--tRNA ligase (867 aa).

Zn(2+) contacts are provided by His559, His563, Cys661, and His665.

Belongs to the class-II aminoacyl-tRNA synthetase family. It depends on Zn(2+) as a cofactor.

It is found in the cytoplasm. It carries out the reaction tRNA(Ala) + L-alanine + ATP = L-alanyl-tRNA(Ala) + AMP + diphosphate. Functionally, catalyzes the attachment of alanine to tRNA(Ala) in a two-step reaction: alanine is first activated by ATP to form Ala-AMP and then transferred to the acceptor end of tRNA(Ala). Also edits incorrectly charged Ser-tRNA(Ala) and Gly-tRNA(Ala) via its editing domain. In Aquifex aeolicus (strain VF5), this protein is Alanine--tRNA ligase.